The following is a 248-amino-acid chain: Segregation and condensation protein A (248 aa).

It belongs to the ScpA family. Component of a cohesin-like complex composed of ScpA, ScpB and the Smc homodimer, in which ScpA and ScpB bind to the head domain of Smc. The presence of the three proteins is required for the association of the complex with DNA.

Its subcellular location is the cytoplasm. Its function is as follows. Participates in chromosomal partition during cell division. May act via the formation of a condensin-like complex containing Smc and ScpB that pull DNA away from mid-cell into both cell halves. This chain is Segregation and condensation protein A, found in Clostridium perfringens (strain SM101 / Type A).